We begin with the raw amino-acid sequence, 979 residues long: MDSDEIMPDEEHPNVPVGDEESDIDEKYPNRPRNHSPTLPFHELFQTLFNPLGEIKKKPAGAVAARRKVGPHGQSAANLNPLERRRDVIERFISRWRKEVGDDIYPAFRLILPDKDRDRAMYGIKEKAIGKMLVKIMKIDKNSEDGFNLLNWKLPGQAATSRMTGDFAGRCFDVISKRPMRTDVGDMLIEEVNEKLDKLSAASKEEQQLPILAEFYRRMNPEELMWLIRIILRQMKVGATERTFFDVWHPDAENLYSISSSLRRVCWELHDPNIRLDAEDRGISLMQCFQPQLAQFQMDSLDRMVARMRPTEEDPVFWIEEKLDGERMQLHMASDDSVPGGRRFRFWSRKAKEYTYLYGNGIYDENGSLTRYLKDAFADGVQSLILDGEMITWDPEQDAPAPFGTLKTAALSEQRNPFSTTGARPLLRVFDILYLNGRDLTGYTLRDRRKALQKAVRPVHRRFEIHPYEEATTKDQVEAALRKVVAEASEGLVLKNPRSPYRLNERHDDWMKVKPEYMTEFGESLDLIVIGGYYGSGRRGGNLSSFLCGLRVDDGHASQGASASKCYSFCKVGGGFNAADYANIRHHTDGKWMEWNPKKPPTAYIELAGRDAQYERPDMWIKPEDSVVICVKAASVSASDQFRLGLTLRFPRFKRLRMDKDWKSALSVQEFLDLKSNVEQEHREKELNVDNSRRKRVKRTAKKPLTVAGYDMDEDVKYAGPSGHIFDGLNFYILTDSSAPIKKTKPELEQLVKANGGMFFQTNNAAPHTICVADRRTVKAASLQKRGDVDIIRPSWIIDCVKQNEIDAGLPDFLLPFEPRHMFFATPGKHDEVASNVDQFGDSYARDTTSEELSDCPESITKLIERLQESVNSGHEMPCGLLFKSLTILFPHRNDDVSESEAKTSSHPSITHVVIDPESSSKEISSLRGKWSRKPGRKVPHIVTVDWVEESWKSRTLLDEERFQPKRCISGIAKPYWPG.

Residues 1–39 (MDSDEIMPDEEHPNVPVGDEESDIDEKYPNRPRNHSPTL) form a disordered region. Residues Glu-320, Lys-322, Leu-323, Arg-327, Glu-389, Phe-430, Glu-490, Lys-495, Lys-512, and Lys-514 each coordinate ATP. Lys-322 serves as the catalytic N6-AMP-lysine intermediate. Glu-389 is a binding site for Mg(2+). Glu-490 contributes to the Mg(2+) binding site. 2 consecutive BRCT domains span residues 721 to 814 (PSGH…PDFL) and 867 to 965 (LQES…RFQP).

This sequence belongs to the ATP-dependent DNA ligase family. Mg(2+) is required as a cofactor.

The protein resides in the nucleus. The enzyme catalyses ATP + (deoxyribonucleotide)n-3'-hydroxyl + 5'-phospho-(deoxyribonucleotide)m = (deoxyribonucleotide)n+m + AMP + diphosphate.. Its function is as follows. DNA ligase involved in DNA non-homologous end joining (NHEJ); required for double-strand break (DSB) repair. This chain is DNA ligase 4 (lig4), found in Aspergillus fumigatus (strain ATCC MYA-4609 / CBS 101355 / FGSC A1100 / Af293) (Neosartorya fumigata).